We begin with the raw amino-acid sequence, 402 residues long: Sulfate adenylyltransferase (402 aa).

It belongs to the sulfate adenylyltransferase family.

It carries out the reaction sulfate + ATP + H(+) = adenosine 5'-phosphosulfate + diphosphate. It participates in sulfur metabolism; hydrogen sulfide biosynthesis; sulfite from sulfate: step 1/3. The polypeptide is Sulfate adenylyltransferase (Ruthia magnifica subsp. Calyptogena magnifica).